Consider the following 126-residue polypeptide: MKLLILALTCAAAVWARPGETYSDKYDTIDVNEVLQSERLLKGYVECLLDKGRCTPDGKELKDTLPDALEHECSKCTEKQKSGADTVIRHLVNKRPELWKELAVKYDPENIYQERYKDRLESVKEH.

The signal sequence occupies residues 1–18; the sequence is MKLLILALTCAAAVWARP.

Belongs to the insect A10/OS-D protein family.

The protein localises to the secreted. This chain is Allergen Tha p 1, found in Thaumetopoea pityocampa (Pine processionary moth).